Consider the following 381-residue polypeptide: Creatine kinase B-type (381 aa).

Ser-4 carries the post-translational modification Phosphoserine. Residues 11 to 98 (KLRFPAEDEF…FDPIIEDRHG (88 aa)) enclose the Phosphagen kinase N-terminal domain. Thr-35 is modified (phosphothreonine). Lys-45 participates in a covalent cross-link: Glycyl lysine isopeptide (Lys-Gly) (interchain with G-Cter in ubiquitin). Residue Val-72 participates in creatine binding. Residues 96-110 (RHGGYKPSDEHKTDL) show a composition bias toward basic and acidic residues. The disordered stretch occupies residues 96–123 (RHGGYKPSDEHKTDLNPDNLQGGDDLDP). Glycyl lysine isopeptide (Lys-Gly) (interchain with G-Cter in ubiquitin) cross-links involve residues Lys-101 and Lys-107. A Phosphotyrosine modification is found at Tyr-125. In terms of domain architecture, Phosphagen kinase C-terminal spans 125 to 367 (YVLSSRVRTG…KLLIEMEQRL (243 aa)). ATP-binding positions include 128-132 (SSRVR), Arg-130, Arg-132, and His-191. The tract at residues 130–138 (RVRTGRSIR) is internal MTS-like signal. Ser-199 is modified (phosphoserine). Residue Glu-232 participates in creatine binding. Residue Arg-236 participates in ATP binding. Position 269 is a 3'-nitrotyrosine (Tyr-269). Ser-285 provides a ligand contact to creatine. ATP-binding positions include Arg-292, Arg-320, 320–325 (RGTGGV), and Asp-335. Thr-322 carries the post-translational modification Phosphothreonine. Lys-381 is covalently cross-linked (Glycyl lysine isopeptide (Lys-Gly) (interchain with G-Cter in ubiquitin)).

It belongs to the ATP:guanido phosphotransferase family. In terms of assembly, dimer of identical or non-identical chains, which can be either B (brain type) or M (muscle type). With MM being the major form in skeletal muscle and myocardium, MB existing in myocardium, and BB existing in many tissues, especially brain. Interacts with SLC12A6 (via C-terminus); the interaction may be required for SLC12A6 potassium-chloride cotransport activity. Post-translationally, ubiquitinated by the ECS(ASB9) complex, leading to its degradation by the proteasome.

It is found in the cytoplasm. It localises to the cytosol. The protein resides in the mitochondrion. Its subcellular location is the cell membrane. It carries out the reaction creatine + ATP = N-phosphocreatine + ADP + H(+). Reversibly catalyzes the transfer of phosphate between ATP and various phosphogens (e.g. creatine phosphate). Creatine kinase isoenzymes play a central role in energy transduction in tissues with large, fluctuating energy demands, such as skeletal muscle, heart, brain and spermatozoa. Acts as a key regulator of adaptive thermogenesis as part of the futile creatine cycle: localizes to the mitochondria of thermogenic fat cells and acts by mediating phosphorylation of creatine to initiate a futile cycle of creatine phosphorylation and dephosphorylation. During the futile creatine cycle, creatine and N-phosphocreatine are in a futile cycle, which dissipates the high energy charge of N-phosphocreatine as heat without performing any mechanical or chemical work. The polypeptide is Creatine kinase B-type (CKB) (Canis lupus familiaris (Dog)).